The chain runs to 307 residues: D-alanine--D-alanine ligase (307 aa).

The 194-residue stretch at 108 to 301 (KEVFAAAGLP…FPEFCAWLVE (194 aa)) folds into the ATP-grasp domain. 135–185 (LPPPYVVKPNAEGSSVGVYIVHEDANGPPQLAADMPQDLMVETYVPGRELT) contacts ATP. Mg(2+) contacts are provided by D252, E268, and N270.

The protein belongs to the D-alanine--D-alanine ligase family. Requires Mg(2+) as cofactor. Mn(2+) is required as a cofactor.

The protein resides in the cytoplasm. It catalyses the reaction 2 D-alanine + ATP = D-alanyl-D-alanine + ADP + phosphate + H(+). Its pathway is cell wall biogenesis; peptidoglycan biosynthesis. In terms of biological role, cell wall formation. The protein is D-alanine--D-alanine ligase of Cereibacter sphaeroides (strain ATCC 17029 / ATH 2.4.9) (Rhodobacter sphaeroides).